Consider the following 325-residue polypeptide: uncharacterized protein (325 aa).

2 disordered regions span residues 32 to 65 (LSTPVYRKKSRRSVSQSRPTSIIEPPKRSIVPPI) and 99 to 152 (GDSL…ASSG). The Globin domain maps to 153–291 (LVPSLNRLRI…LFTGVRDGYY (139 aa)).

This is an uncharacterized protein from Caenorhabditis elegans.